Consider the following 857-residue polypeptide: Facilitated trehalose transporter Tret1-1 (857 aa).

Disordered stretches follow at residues 1–28 and 62–203; these read MSGR…KLKE and DPFL…KATS. Residues 1 to 392 are Cytoplasmic-facing; sequence MSGRDSRGAG…VYRPTTNPIY (392 aa). A compositionally biased stretch (polar residues) spans 69-81; that stretch reads VSPQRHPQNTVRT. Over residues 134–143 the composition is skewed to basic and acidic residues; that stretch reads EIREHRDRQQ. Over residues 171–181 the composition is skewed to polar residues; the sequence is GNSNTNSNKAA. A phosphoserine mark is found at S248, S249, S250, S320, and S322. Residues 327-346 form a disordered region; that stretch reads LTSRQHFQQQRSISTDSRKS. Over residues 330 to 341 the composition is skewed to polar residues; that stretch reads RQHFQQQRSIST. A helical transmembrane segment spans residues 393–413; that stretch reads IWTQVLAALSVSLGSLVVGFV. The Extracellular portion of the chain corresponds to 414-440; that stretch reads SAYTSPALVSMTDRNITSFEVTQDAGS. N428 carries N-linked (GlcNAc...) asparagine glycosylation. The chain crosses the membrane as a helical span at residues 441–461; sequence WVGGIMPLAGLAGGIAGGPLI. Residues 462–473 lie on the Cytoplasmic side of the membrane; it reads EYLGRRNTILAT. A helical transmembrane segment spans residues 474–494; that stretch reads AVPFIVSSLLIACAVNVAMVL. The Extracellular segment spans residues 495–497; sequence CGR. The helical transmembrane segment at 498–518 threads the bilayer; the sequence is FLAGFCVGIASLSLPVYLGET. Residues 519–528 lie on the Cytoplasmic side of the membrane; the sequence is VQPEVRGTLG. A helical membrane pass occupies residues 529–549; that stretch reads LLPTAFGNIGILLCFVAGSFM. N550 carries an N-linked (GlcNAc...) asparagine glycan. Over 550 to 552 the chain is Extracellular; that stretch reads NWS. A helical membrane pass occupies residues 553–573; it reads MLAFLGAALPVPFLILMFLIP. The Cytoplasmic portion of the chain corresponds to 574-636; that stretch reads ETPRWFVGRG…ELFKRINLKP (63 aa). A helical membrane pass occupies residues 637–657; the sequence is LSISLGLMFFQQFSGINAVIF. Over 658-673 the chain is Extracellular; the sequence is YTVQIFKDAGSTIDSN. A helical transmembrane segment spans residues 674–694; the sequence is LCTIIVGIVNFFATFMGILLI. Over 695 to 700 the chain is Cytoplasmic; the sequence is DRLGRK. A helical transmembrane segment spans residues 701–721; that stretch reads ILLYISDIAMILTLSILGGFF. The Extracellular portion of the chain corresponds to 722–740; it reads YCKAHGPDVSHLGWLPLTC. A helical membrane pass occupies residues 741 to 761; sequence FVIYILGFSLGFGPIPWLMMG. The Cytoplasmic portion of the chain corresponds to 762–770; the sequence is EILPAKIRG. Residues 771–791 form a helical membrane-spanning segment; that stretch reads PAASVVTAFNWFCTFVVTKTF. The Extracellular segment spans residues 792–801; the sequence is QDLTGAMGAH. The chain crosses the membrane as a helical span at residues 802–822; sequence GAFWLFGAICFVGLFFVIIYV. At 823–857 the chain is on the cytoplasmic side; it reads PETQGKTLEDIERKMMGRVRRMSSVANIKPLSFNM. Residues S845 and S846 each carry the phosphoserine modification.

It belongs to the major facilitator superfamily. Sugar transporter (TC 2.A.1.1) family. Trehalose transporter subfamily.

It is found in the cell membrane. In terms of biological role, low-capacity facilitative transporter for trehalose. Does not transport maltose, sucrose or lactose. Mediates the bidirectional transfer of trehalose. Responsible for the transport of trehalose synthesized in the fat body and the incorporation of trehalose into other tissues that require a carbon source, thereby regulating trehalose levels in the hemolymph. This is Facilitated trehalose transporter Tret1-1 from Drosophila simulans (Fruit fly).